Consider the following 192-residue polypeptide: NOP protein chaperone 1 (192 aa).

Over residues 1 to 26 the composition is skewed to low complexity; the sequence is MEVSGESHSGPSCSSSSRDGSGVSVS. The segment at 1-39 is disordered; it reads MEVSGESHSGPSCSSSSRDGSGVSVSKELLMAGSGGRGG. 2 positions are modified to phosphoserine: S34 and S66. The tract at residues 118–192 is disordered; sequence FEMNQSHSKE…SENKEKQENK (75 aa). Residues 129–152 are compositionally biased toward acidic residues; sequence DSSEENSQDSSEESSESEDEDDST. Residues 164–177 show a composition bias toward basic and acidic residues; the sequence is KLPHSEDGKGKIEV. S180 is modified (phosphoserine).

Interacts with NOP58, RUVBL1 and RUVBL2; the interactions are direct and NOPCHAP1 bridges the association of NOP58 with RUVBL1:RUVBL2 even in absence of snoRNAs. The interactions with RUVBL1 and RUVBL2 are disrupted upon ATP binding.

It is found in the nucleus. Functionally, client-loading PAQosome/R2TP complex cofactor that selects NOP58 to promote box C/D small nucleolar ribonucleoprotein (snoRNP) assembly. Acts as a bridge between NOP58 and the R2TP complex via RUVBL1:RUVBL2. This is NOP protein chaperone 1 (NOPCHAP1) from Bos taurus (Bovine).